The chain runs to 202 residues: Hydrogenase expression/formation protein HoxM (202 aa).

Ni(2+) contacts are provided by E15, D61, and H92.

It belongs to the peptidase A31 family.

Its function is as follows. Absolutely required for hydrogenase activity. Mediates the attachment of hydrogenase to the bacterial membrane; attachment is a requirement for enzymatic activity. In Cupriavidus necator (strain ATCC 17699 / DSM 428 / KCTC 22496 / NCIMB 10442 / H16 / Stanier 337) (Ralstonia eutropha), this protein is Hydrogenase expression/formation protein HoxM (hoxM).